The sequence spans 77 residues: Large ribosomal subunit protein bL28 (77 aa).

Positions 1–25 (MARVCQVTGKAPMSGNNVSHANNKT) are disordered.

Belongs to the bacterial ribosomal protein bL28 family.

This Paraburkholderia phymatum (strain DSM 17167 / CIP 108236 / LMG 21445 / STM815) (Burkholderia phymatum) protein is Large ribosomal subunit protein bL28.